We begin with the raw amino-acid sequence, 234 residues long: Gene 53 protein (234 aa).

This Mycobacterium phage L5 (Mycobacteriophage L5) protein is Gene 53 protein (53).